The following is a 261-amino-acid chain: 14-3-3 protein 9 (261 aa).

The segment at 239–261 (PEDAEDAQKGDATNKAGGGEDAE) is disordered.

The protein belongs to the 14-3-3 family. In terms of assembly, homodimer.

The chain is 14-3-3 protein 9 (TFT9) from Solanum lycopersicum (Tomato).